Reading from the N-terminus, the 209-residue chain is Putative amino acid efflux protein YcgF (209 aa).

A run of 6 helical transmembrane segments spans residues 1 to 21, 39 to 59, 62 to 82, 110 to 130, 147 to 167, and 184 to 204; these read MNIF…VGPV, IFGL…YFGL, FLTA…VLTY, FASG…WLGI, LLIY…CMAI, and LTGI…YQGI.

It belongs to the Rht family.

The protein localises to the cell membrane. In Bacillus subtilis (strain 168), this protein is Putative amino acid efflux protein YcgF (ycgF).